A 258-amino-acid chain; its full sequence is Ribosomal RNA small subunit methyltransferase J (258 aa).

S-adenosyl-L-methionine-binding positions include arginine 107–aspartate 108, glutamate 123–arginine 124, and aspartate 177.

The protein belongs to the methyltransferase superfamily. RsmJ family.

Its subcellular location is the cytoplasm. It catalyses the reaction guanosine(1516) in 16S rRNA + S-adenosyl-L-methionine = N(2)-methylguanosine(1516) in 16S rRNA + S-adenosyl-L-homocysteine + H(+). Specifically methylates the guanosine in position 1516 of 16S rRNA. The chain is Ribosomal RNA small subunit methyltransferase J from Stutzerimonas stutzeri (strain A1501) (Pseudomonas stutzeri).